The chain runs to 228 residues: L-ribulose-5-phosphate 4-epimerase UlaF (228 aa).

Residues 26-27 (GN), 43-44 (SG), and 72-73 (SS) contribute to the substrate site. Zn(2+) contacts are provided by Asp74, His93, and His95. Asp118 functions as the Proton donor/acceptor in the catalytic mechanism. Residue His167 coordinates Zn(2+). Tyr225 (proton donor/acceptor) is an active-site residue.

Belongs to the aldolase class II family. AraD/FucA subfamily. Zn(2+) serves as cofactor.

It carries out the reaction L-ribulose 5-phosphate = D-xylulose 5-phosphate. It participates in cofactor degradation; L-ascorbate degradation; D-xylulose 5-phosphate from L-ascorbate: step 4/4. In terms of biological role, catalyzes the isomerization of L-ribulose 5-phosphate to D-xylulose 5-phosphate. Is involved in the anaerobic L-ascorbate utilization. The polypeptide is L-ribulose-5-phosphate 4-epimerase UlaF (Escherichia coli O7:K1 (strain IAI39 / ExPEC)).